The sequence spans 293 residues: Homeobox protein ceh-24 (293 aa).

2 stretches are compositionally biased toward basic and acidic residues: residues 1-15 and 22-38; these read MSEKESPSPQHKKDE and QETKDSEDDATKKMKIK. 2 disordered regions span residues 1-38 and 203-256; these read MSEKESPSPQHKKDEVVDDTEQETKDSEDDATKKMKIK and EKEK…SNGV. A DNA-binding region (homeobox) is located at residues 144-203; that stretch reads RRKRRVLFSQAQVYELERRFKQAKYLTAPEREQLANSIRLTPTQVKIWFQNHRYKCKRQE.

Belongs to the NK-2 homeobox family. As to expression, expressed in the 8 vulval muscles, 8-10 ventral neurons in the head and in the most posterior pharyngeal muscle cell, m8.

It is found in the nucleus. Probable transcriptional regulator that is required in neural development for the normal formation of sublateral cholinergic motor neuron processes. Plays a role in regulating the expression of acetylcholine transporter protein unc-17 in the sublateral processes. In particular, it is required in sublateral motor neurons for a left-right turning behavior that occurs during the lethargus phase of the normal sleep process called 'flipping'. During 'flipping' animals rotate 180 degrees about their longitudinal axis. The chain is Homeobox protein ceh-24 from Caenorhabditis briggsae.